We begin with the raw amino-acid sequence, 858 residues long: DNA replication licensing factor mcm4-A (858 aa).

A disordered region spans residues 1-125 (MSSPTSTPSR…ARKVKQVDLH (125 aa)). Composition is skewed to polar residues over residues 54-68 (SPSG…SSPA) and 79-94 (LDLS…SSRV). The C4-type zinc finger occupies 301–326 (CQVCAFTTRVEIDRGRIAEPSVCKHC). The MCM domain occupies 453–662 (IYERLAAALA…YDRRLAHHLV (210 aa)). Tyr-466, Arg-492, Lys-511, Ser-512, Asn-613, Arg-638, Arg-727, and Glu-730 together coordinate ATP. The Arginine finger signature appears at 637-640 (SRFD).

Belongs to the MCM family. Component of the mcm2-7 complex (RLF-M). The complex forms a toroidal hexameric ring with the proposed subunit order mcm2-mcm6-mcm4-mcm7-mcm3-mcm5. The heterodimer of mmcm3/mcm5 interacts with mcm4, mmcm6, mcm7 and weakly with mcm2. Component of the CMG helicase complex, composed of the mcm2-7 complex, the GINS complex and cdc45. Hyperphosphorylated during mitosis in a mechanism requiring cdc2-cyclin B and other kinases. Undergoes dephosphorylation after exiting mitosis, existing in a partially phosphorylated state in the cytosolic interphase mcm complex which associates with the pre-replication complexes (pre-Rcs). Complete dephosphorylation inactivates the mcm complex, preventing its binding to chromatin. Becomes actively phosphorylated during S phase once the mcm complex is assembled on the chromatin. This chromatin-associated phosphorylation occurs during the activation of the pre-Rcs and is independent of cdks. Phosphorylated by the cdc7-dbf4b complex.

The protein resides in the nucleus. Its subcellular location is the chromosome. The catalysed reaction is ATP + H2O = ADP + phosphate + H(+). Acts as a component of the MCM2-7 complex (MCM complex) which is the replicative helicase essential for 'once per cell cycle' DNA replication initiation and elongation in eukaryotic cells. Core component of CDC45-MCM-GINS (CMG) helicase, the molecular machine that unwinds template DNA during replication, and around which the replisome is built. The active ATPase sites in the MCM2-7 ring are formed through the interaction surfaces of two neighboring subunits such that a critical structure of a conserved arginine finger motif is provided in trans relative to the ATP-binding site of the Walker A box of the adjacent subunit. The six ATPase active sites, however, are likely to contribute differentially to the complex helicase activity. The protein is DNA replication licensing factor mcm4-A (mcm4-a) of Xenopus laevis (African clawed frog).